Reading from the N-terminus, the 192-residue chain is Large ribosomal subunit protein bL25 (192 aa).

Belongs to the bacterial ribosomal protein bL25 family. CTC subfamily. As to quaternary structure, part of the 50S ribosomal subunit; part of the 5S rRNA/L5/L18/L25 subcomplex. Contacts the 5S rRNA. Binds to the 5S rRNA independently of L5 and L18.

This is one of the proteins that binds to the 5S RNA in the ribosome where it forms part of the central protuberance. The polypeptide is Large ribosomal subunit protein bL25 (Porphyromonas gingivalis (strain ATCC 33277 / DSM 20709 / CIP 103683 / JCM 12257 / NCTC 11834 / 2561)).